The following is a 263-amino-acid chain: Oncostatin-M (263 aa).

The N-terminal stretch at M1 to A24 is a signal peptide. Intrachain disulfides connect C28/C139 and C71/C177. 3 N-linked (GlcNAc...) asparagine glycosylation sites follow: N30, N44, and N145. Positions Q207–A263 are excised as a propeptide. The span at W241–P252 shows a compositional bias: basic residues. Residues W241 to A263 are disordered. Residues S253 to A263 are compositionally biased toward polar residues.

It belongs to the LIF/OSM family. In terms of processing, propeptide processing is not important for receptor binding activity but may be important growth-inhibitory activity.

The protein resides in the secreted. In terms of biological role, growth regulator. Inhibits the proliferation of a number of tumor cell lines. It regulates cytokine production, including IL-6, G-CSF and GM-CSF from endothelial cells. Uses only type II OSM receptor (heterodimers composed of OSMR and IL6ST). Involved in the maturation of fetal hepatocytes, thereby promoting liver development and regeneration. The protein is Oncostatin-M (Osm) of Mus musculus (Mouse).